Here is a 710-residue protein sequence, read N- to C-terminus: Polyribonucleotide nucleotidyltransferase (710 aa).

2 residues coordinate Mg(2+): D485 and D491. In terms of domain architecture, KH spans 552-611; that stretch reads PKILTLTINPDKIRDVIGPSGKVINKIIEETGVKIDIEQDGTVYISSLDTAMNQKAKQII. An S1 motif domain is found at 621–689; that stretch reads GETYHGKVKR…NQGRVNLSRK (69 aa).

Belongs to the polyribonucleotide nucleotidyltransferase family. Mg(2+) is required as a cofactor.

The protein resides in the cytoplasm. It catalyses the reaction RNA(n+1) + phosphate = RNA(n) + a ribonucleoside 5'-diphosphate. In terms of biological role, involved in mRNA degradation. Catalyzes the phosphorolysis of single-stranded polyribonucleotides processively in the 3'- to 5'-direction. This chain is Polyribonucleotide nucleotidyltransferase, found in Shouchella clausii (strain KSM-K16) (Alkalihalobacillus clausii).